The primary structure comprises 465 residues: MGLYAAAAAVLAGVESRQGSLKGLVYSSNFQNLKQLYALVCETQRYSAVLDAVIASAGLLRAEKKLRPHLAKVLVYELLLGKGFRGGGGRWKALLGRHQARLKAELARLKVHRGVSRNEDLLQESSRPGQAYQVPRFVRVNTLKTRPEDAIDYFKRQGFSYQGRASSLEDLRALKGQHFLLDPLLPELLVFPAQTDLHEHPLYRAGHLILQDKASCLPAMLLSPPPGSHVIDACAAPGNKTSYIAALLKNQGKIFAFDQDAKRLAAMATLVARAGVSCCELAEKDFLTVSPSDQRYSQVQYILLDPSCSGSGMLSRQLEEHGEGTPSKERLQALAGFQQRALCHALRFPSLQRLVYSTCSLCQEENEDVVQEALQHNSGTFRLAPVLPTWPHRGLSTFPGSEHCLRASPETTLTGGFFIAVFERAEVVPTPAPQTDAMDPEPLSQVPKRKRRRKAAVGASMQPST.

Residue G2 is modified to N-acetylglycine. Position 167 is a phosphoserine (S167). S-adenosyl-L-methionine-binding positions include 234–240, D258, R263, and D305; that span reads CAAPGNK. Catalysis depends on C359, which acts as the Nucleophile. A disordered region spans residues 430–465; sequence TPAPQTDAMDPEPLSQVPKRKRRRKAAVGASMQPST.

This sequence belongs to the class I-like SAM-binding methyltransferase superfamily. RsmB/NOP family. As to expression, in the hippocampus, specifically expressed in adult hippocampal NG2-positive oligodendrocyte precursor cells (at protein level).

It is found in the nucleus. The protein resides in the nucleolus. It catalyses the reaction a cytidine in 28S rRNA + S-adenosyl-L-methionine = a 5-methylcytidine in 28S rRNA + S-adenosyl-L-homocysteine + H(+). S-adenosyl-L-methionine-dependent methyltransferase that specifically methylates the C(5) position of cytosine 3438 (m5C3438) in 28S rRNA. m5C3782 promotes protein translation without affecting ribosome biogenesis and fidelity. Required for corpus callosum and cerebral cortex development. In Mus musculus (Mouse), this protein is 28S rRNA (cytosine-C(5))-methyltransferase.